A 291-amino-acid chain; its full sequence is tRNA dimethylallyltransferase (291 aa).

Residue 9 to 16 coordinates ATP; the sequence is GPTASGKT. 11-16 contributes to the substrate binding site; that stretch reads TASGKT. An interaction with substrate tRNA region spans residues 34–37; sequence DSLQ.

The protein belongs to the IPP transferase family. As to quaternary structure, monomer. Mg(2+) serves as cofactor.

The enzyme catalyses adenosine(37) in tRNA + dimethylallyl diphosphate = N(6)-dimethylallyladenosine(37) in tRNA + diphosphate. Catalyzes the transfer of a dimethylallyl group onto the adenine at position 37 in tRNAs that read codons beginning with uridine, leading to the formation of N6-(dimethylallyl)adenosine (i(6)A). This chain is tRNA dimethylallyltransferase, found in Onion yellows phytoplasma (strain OY-M).